The following is a 73-amino-acid chain: Lactogenin (73 aa).

Glutamine 1 carries the pyrrolidone carboxylic acid modification.

This sequence belongs to the pancreatic ribonuclease family. As to expression, milk.

The protein localises to the secreted. Its function is as follows. Secretory RNase specific towards pyrimidine bases, with higher activity towards poly C than poly U. Inhibits cell-free translation. The polypeptide is Lactogenin (Bos taurus (Bovine)).